A 1288-amino-acid polypeptide reads, in one-letter code: Probable serine/threonine-protein kinase drkD (1288 aa).

Residues 1-12 (MEGSFQFNKSKQ) show a composition bias toward polar residues. Disordered stretches follow at residues 1 to 132 (MEGS…QYHP), 156 to 223 (FNVS…PEEI), and 269 to 386 (SFGH…DDEE). Composition is skewed to low complexity over residues 13–79 (TNNN…NSTS) and 156–220 (FNVS…QQQP). Residues 221-248 (EEIEGELNRERQERDKMLHEEAEIEQYK) adopt a coiled-coil conformation. Residues 271-291 (GHITSANSDETTNNESGSPIN) show a composition bias toward polar residues. Positions 302-343 (PHSSHNEDHQSDQDNHGQFMNDEHQSTDDDQNKSDNEKESES) are enriched in basic and acidic residues. The segment covering 344–354 (ARNSGDLQQKV) has biased composition (polar residues). Positions 376-386 (EGEEEDDDDEE) are enriched in acidic residues. LRR repeat units follow at residues 400–421 (KSTK…VWSI), 423–444 (ELRD…IGLL), 446–468 (HLKR…YSLP), 469–490 (RLTT…INRL), 492–513 (SLKT…TNLH), 517–538 (NLVE…MLES), and 540–561 (HLQV…LKKS). Disordered regions lie at residues 690-717 (WDQQ…VLTG), 733-764 (PTQQ…QQQQ), and 796-825 (QQQQ…KDHQ). 2 stretches are compositionally biased toward polar residues: residues 701–717 (SPNV…VLTG) and 733–757 (PTQQ…HNNN). Residues 851 to 1104 (IAIGARIGRG…EILPIMEGMI (254 aa)) enclose the Protein kinase domain. ATP is bound by residues 857–865 (IGRGGYGQV) and Lys-878. The active-site Proton acceptor is Asp-974. 2 disordered regions span residues 1118-1141 (GRPI…QNMA) and 1245-1288 (QQQL…NDKK). Over residues 1257–1268 (NRLNYNFNNSNN) the composition is skewed to low complexity. Residues 1269–1282 (SDIQPMQQENNYRM) show a composition bias toward polar residues.

This sequence belongs to the protein kinase superfamily. TKL Ser/Thr protein kinase family.

The catalysed reaction is L-seryl-[protein] + ATP = O-phospho-L-seryl-[protein] + ADP + H(+). It carries out the reaction L-threonyl-[protein] + ATP = O-phospho-L-threonyl-[protein] + ADP + H(+). This Dictyostelium discoideum (Social amoeba) protein is Probable serine/threonine-protein kinase drkD (drkD).